The primary structure comprises 143 residues: Sirohydrochlorin cobaltochelatase (143 aa).

His9 serves as the catalytic Proton acceptor. Residue His9 participates in Co(2+) binding. Ni(2+) is bound at residue His9. Residues Glu45 and 70–75 (LAHGVH) each bind substrate. His75 is a binding site for Co(2+). His75 contacts Ni(2+).

This sequence belongs to the CbiX family. CbiXS subfamily. As to quaternary structure, homotetramer; dimer of dimers.

The catalysed reaction is Co-sirohydrochlorin + 2 H(+) = sirohydrochlorin + Co(2+). It catalyses the reaction Ni-sirohydrochlorin + 2 H(+) = sirohydrochlorin + Ni(2+). It functions in the pathway cofactor biosynthesis; adenosylcobalamin biosynthesis; cob(II)yrinate a,c-diamide from sirohydrochlorin (anaerobic route): step 1/10. Functionally, catalyzes the insertion of Co(2+) into sirohydrochlorin as part of the anaerobic pathway to cobalamin biosynthesis. Involved in the biosynthesis of the unique nickel-containing tetrapyrrole coenzyme F430, the prosthetic group of methyl-coenzyme M reductase (MCR), which plays a key role in methanogenesis and anaerobic methane oxidation. Catalyzes the insertion of Ni(2+) into sirohydrochlorin to yield Ni-sirohydrochlorin. This chain is Sirohydrochlorin cobaltochelatase, found in Methanopyrus kandleri (strain AV19 / DSM 6324 / JCM 9639 / NBRC 100938).